The primary structure comprises 413 residues: Probable alpha-amylase 2 (413 aa).

Residues tyrosine 74–leucine 75 and arginine 191–arginine 196 contribute to the substrate site. Aspartate 193 (nucleophile) is an active-site residue. Catalysis depends on glutamate 218, which acts as the Proton donor. Substrate is bound by residues tryptophan 220, serine 222, glutamine 239, aspartate 246, lysine 280, glycine 286 to tryptophan 288, histidine 299, glutamine 305, lysine 386, and tryptophan 411.

This sequence belongs to the glycosyl hydrolase 13 family. Ca(2+) serves as cofactor. Expressed in developing siliques.

The protein localises to the cytoplasm. The protein resides in the cytosol. The enzyme catalyses Endohydrolysis of (1-&gt;4)-alpha-D-glucosidic linkages in polysaccharides containing three or more (1-&gt;4)-alpha-linked D-glucose units.. Functionally, probable alpha-amylase that does not seem to be required for breakdown of transitory starch in leaves. This Arabidopsis thaliana (Mouse-ear cress) protein is Probable alpha-amylase 2 (AMY2).